Reading from the N-terminus, the 223-residue chain is Probable amino-acid ABC transporter permease protein PatM (223 aa).

In terms of domain architecture, ABC transmembrane type-1 spans 19–210 (LGTTMEMATW…GVVVILTRVQ (192 aa)). Transmembrane regions (helical) follow at residues 23–43 (MEMA…LANI), 59–78 (ISFF…YYGL), 90–110 (AFSA…AESI), 156–176 (FIDM…EIMA), and 186–206 (FRFF…VVIL).

The protein belongs to the binding-protein-dependent transport system permease family. HisMQ subfamily.

The protein resides in the cell inner membrane. Functionally, probably part of a binding-protein-dependent transport system for an amino acid. Probably responsible for the translocation of the substrate across the membrane. In Vibrio harveyi (Beneckea harveyi), this protein is Probable amino-acid ABC transporter permease protein PatM (patM).